A 498-amino-acid chain; its full sequence is uncharacterized protein (498 aa).

This is an uncharacterized protein from Acanthamoeba polyphaga (Amoeba).